The primary structure comprises 177 residues: Sec-independent protein translocase protein TatB (177 aa).

A helical transmembrane segment spans residues 1–21; it reads MFDFAWSEIAVIGVVALVVIG. Basic and acidic residues predominate over residues 136–146; the sequence is REKTVSSETAR. The segment at 136 to 177 is disordered; the sequence is REKTVSSETARRAATAPAFIPPGEAFRSARRAPAFIPPADQG.

This sequence belongs to the TatB family. The Tat system comprises two distinct complexes: a TatABC complex, containing multiple copies of TatA, TatB and TatC subunits, and a separate TatA complex, containing only TatA subunits. Substrates initially bind to the TatABC complex, which probably triggers association of the separate TatA complex to form the active translocon.

It localises to the cell inner membrane. Its function is as follows. Part of the twin-arginine translocation (Tat) system that transports large folded proteins containing a characteristic twin-arginine motif in their signal peptide across membranes. Together with TatC, TatB is part of a receptor directly interacting with Tat signal peptides. TatB may form an oligomeric binding site that transiently accommodates folded Tat precursor proteins before their translocation. The chain is Sec-independent protein translocase protein TatB from Granulibacter bethesdensis (strain ATCC BAA-1260 / CGDNIH1).